The following is a 31-amino-acid chain: Cytochrome b6-f complex subunit 6 (31 aa).

A helical membrane pass occupies residues Leu-4–Ser-26.

The protein belongs to the PetL family. The 4 large subunits of the cytochrome b6-f complex are cytochrome b6, subunit IV (17 kDa polypeptide, PetD), cytochrome f and the Rieske protein, while the 4 small subunits are PetG, PetL, PetM and PetN. The complex functions as a dimer.

The protein localises to the plastid. Its subcellular location is the chloroplast thylakoid membrane. In terms of biological role, component of the cytochrome b6-f complex, which mediates electron transfer between photosystem II (PSII) and photosystem I (PSI), cyclic electron flow around PSI, and state transitions. PetL is important for photoautotrophic growth as well as for electron transfer efficiency and stability of the cytochrome b6-f complex. This is Cytochrome b6-f complex subunit 6 from Aethionema grandiflorum (Persian stone-cress).